Reading from the N-terminus, the 361-residue chain is Cilia- and flagella-associated protein 263 (361 aa).

This sequence belongs to the CFAP263 family. Forms a complex with CFAP184; the interaction is required for functional activity in cilia.

The protein localises to the cell projection. It localises to the cilium. Its function is as follows. In complex with CFAP263, acts as a regulator of ciliary beating that connects radial spoke 3 (RS3) to the inner dynein arm (IDA) and the nexin-dynein regulatory complex (N-DRC). The complex is positioned parallel to N-DRC and forms a connection between the arch at the base of RS3, the IDA tail and N-DRC. The protein is Cilia- and flagella-associated protein 263 (CFAP263) of Tetrahymena thermophila (strain SB210).